A 650-amino-acid chain; its full sequence is Probable basic-leucine zipper transcription factor K (650 aa).

A coiled-coil region spans residues 37–180 (IDNNNNNYSN…KQQKQQQQEQ (144 aa)). Disordered stretches follow at residues 109–130 (IPQQQQQEQDQQEDQDQEQEQE) and 242–279 (TTLNTNLQSDNNNNNNNNNNNNNNNNNNNNNNNNNNNL). Residues 118–129 (DQQEDQDQEQEQ) are compositionally biased toward acidic residues. The segment covering 242-251 (TTLNTNLQSD) has biased composition (polar residues). The span at 252-278 (NNNNNNNNNNNNNNNNNNNNNNNNNNN) shows a compositional bias: low complexity. Residues 259 to 286 (NNNNNNNNNNNNNNNNNNNNLLNEKQIE) adopt a coiled-coil conformation. Positions 305-368 (FNKIEKGKRN…IEIMRSEPES (64 aa)) constitute a bZIP domain. Residues 307 to 327 (KIEKGKRNQTESSKNFRERKK) form a basic motif region. Residues 330–337 (IKDIELKL) are leucine-zipper. Low complexity predominate over residues 452-466 (NNNNNNNNNNNNNNN). Residues 452–473 (NNNNNNNNNNNNNNNDNDDDNE) are disordered.

Belongs to the bZIP family.

The protein localises to the nucleus. Its function is as follows. Probable transcriptional regulator. The chain is Probable basic-leucine zipper transcription factor K (bzpK) from Dictyostelium discoideum (Social amoeba).